The following is a 419-amino-acid chain: Acetylornithine aminotransferase (419 aa).

Pyridoxal 5'-phosphate contacts are provided by residues 116-117 (GA) and phenylalanine 149. Arginine 152 provides a ligand contact to N(2)-acetyl-L-ornithine. Residue 240–243 (DEVQ) participates in pyridoxal 5'-phosphate binding. Residue lysine 269 is modified to N6-(pyridoxal phosphate)lysine. Position 296 (serine 296) interacts with N(2)-acetyl-L-ornithine. Position 297 (threonine 297) interacts with pyridoxal 5'-phosphate.

Belongs to the class-III pyridoxal-phosphate-dependent aminotransferase family. ArgD subfamily. Homodimer. It depends on pyridoxal 5'-phosphate as a cofactor.

The protein resides in the cytoplasm. It catalyses the reaction N(2)-acetyl-L-ornithine + 2-oxoglutarate = N-acetyl-L-glutamate 5-semialdehyde + L-glutamate. The protein operates within amino-acid biosynthesis; L-arginine biosynthesis; N(2)-acetyl-L-ornithine from L-glutamate: step 4/4. The sequence is that of Acetylornithine aminotransferase from Prochlorococcus marinus (strain SARG / CCMP1375 / SS120).